The chain runs to 268 residues: Casein kinase II subunit beta (268 aa).

The segment at 222 to 268 (LSNNNQNNQNNNINNNNNNNNNNNNNNNNNNNNQQNNNNQQNNNTNK) is disordered. Residues 224-268 (NNNQNNQNNNINNNNNNNNNNNNNNNNNNNNQQNNNNQQNNNTNK) show a composition bias toward low complexity.

It belongs to the casein kinase 2 subunit beta family. As to quaternary structure, casein kinase II/CK2 is a tetramer composed of two alpha subunit and two beta subunits.

In terms of biological role, regulatory subunit of casein kinase II/CK2. As part of the kinase complex regulates the basal catalytic activity of the alpha subunit a constitutively active serine/threonine-protein kinase that phosphorylates a large number of substrates containing acidic residues C-terminal to the phosphorylated serine or threonine. In Dictyostelium discoideum (Social amoeba), this protein is Casein kinase II subunit beta (csnk2b).